Here is a 355-residue protein sequence, read N- to C-terminus: Peptide chain release factor 1 (355 aa).

Gln232 is modified (N5-methylglutamine).

The protein belongs to the prokaryotic/mitochondrial release factor family. Methylated by PrmC. Methylation increases the termination efficiency of RF1.

The protein resides in the cytoplasm. Its function is as follows. Peptide chain release factor 1 directs the termination of translation in response to the peptide chain termination codons UAG and UAA. This Kineococcus radiotolerans (strain ATCC BAA-149 / DSM 14245 / SRS30216) protein is Peptide chain release factor 1.